Here is a 94-residue protein sequence, read N- to C-terminus: Pyrimidine/purine nucleoside phosphorylase (94 aa).

Belongs to the nucleoside phosphorylase PpnP family.

The enzyme catalyses a purine D-ribonucleoside + phosphate = a purine nucleobase + alpha-D-ribose 1-phosphate. It catalyses the reaction adenosine + phosphate = alpha-D-ribose 1-phosphate + adenine. It carries out the reaction cytidine + phosphate = cytosine + alpha-D-ribose 1-phosphate. The catalysed reaction is guanosine + phosphate = alpha-D-ribose 1-phosphate + guanine. The enzyme catalyses inosine + phosphate = alpha-D-ribose 1-phosphate + hypoxanthine. It catalyses the reaction thymidine + phosphate = 2-deoxy-alpha-D-ribose 1-phosphate + thymine. It carries out the reaction uridine + phosphate = alpha-D-ribose 1-phosphate + uracil. The catalysed reaction is xanthosine + phosphate = alpha-D-ribose 1-phosphate + xanthine. Its function is as follows. Catalyzes the phosphorolysis of diverse nucleosides, yielding D-ribose 1-phosphate and the respective free bases. Can use uridine, adenosine, guanosine, cytidine, thymidine, inosine and xanthosine as substrates. Also catalyzes the reverse reactions. The protein is Pyrimidine/purine nucleoside phosphorylase of Pseudomonas putida (strain ATCC 700007 / DSM 6899 / JCM 31910 / BCRC 17059 / LMG 24140 / F1).